Reading from the N-terminus, the 254-residue chain is MSQISPLYYGIIPARYGSSRLPGKPLIDIWGKPMFWYVYQNAVESNIFRSVVLATDSEEIAESAHQLSIPYVMTSVEHISGTDRVYEAAIKMNIEPDSVVVNIQGDEPLVKPEAIQQLVEPFIDVSIQVTTLSTRITANQAMLPHQVKVVVSSNGDALYFSRAAIPYLRDNDTDGYYLGHIGLYAFRMHTLDKFVHLPPSQLEQFEKLEQLRLLENNIPIRVVNTNHTSQGVDTVEDLEIVQGLLAQRMEAVSR.

It belongs to the KdsB family.

Its subcellular location is the cytoplasm. It carries out the reaction 3-deoxy-alpha-D-manno-oct-2-ulosonate + CTP = CMP-3-deoxy-beta-D-manno-octulosonate + diphosphate. The protein operates within nucleotide-sugar biosynthesis; CMP-3-deoxy-D-manno-octulosonate biosynthesis; CMP-3-deoxy-D-manno-octulosonate from 3-deoxy-D-manno-octulosonate and CTP: step 1/1. Activates KDO (a required 8-carbon sugar) for incorporation into bacterial lipopolysaccharide in Gram-negative bacteria. This chain is 3-deoxy-manno-octulosonate cytidylyltransferase, found in Lawsonia intracellularis (strain PHE/MN1-00).